Consider the following 295-residue polypeptide: Sulfotransferase 1A1 (295 aa).

48-53 (KSGTTW) serves as a coordination point for 3'-phosphoadenylyl sulfate. Residue 106 to 108 (KTH) participates in substrate binding. His108 acts as the Proton acceptor in catalysis. 3'-phosphoadenylyl sulfate-binding positions include Arg130, Ser138, Tyr193, 227 to 232 (TSFKEM), and 255 to 259 (FMRKG). The residue at position 138 (Ser138) is a Phosphoserine.

Belongs to the sulfotransferase 1 family. Homodimer. As to expression, liver, lung, adrenal, brain, platelets and skin.

It is found in the cytoplasm. It carries out the reaction a phenol + 3'-phosphoadenylyl sulfate = an aryl sulfate + adenosine 3',5'-bisphosphate + H(+). The enzyme catalyses 17beta-estradiol + 3'-phosphoadenylyl sulfate = 17beta-estradiol 3-sulfate + adenosine 3',5'-bisphosphate + H(+). The catalysed reaction is 4-ethylphenol + 3'-phosphoadenylyl sulfate = 4-ethylphenyl sulfate + adenosine 3',5'-bisphosphate + H(+). It catalyses the reaction 4-nitrophenol + 3'-phosphoadenylyl sulfate = 4-nitrophenyl sulfate + adenosine 3',5'-bisphosphate. It carries out the reaction dopamine + 3'-phosphoadenylyl sulfate = dopamine 3-O-sulfate + adenosine 3',5'-bisphosphate + H(+). The enzyme catalyses dopamine + 3'-phosphoadenylyl sulfate = dopamine 4-O-sulfate + adenosine 3',5'-bisphosphate + H(+). The catalysed reaction is 3,3',5-triiodo-L-thyronine + 3'-phosphoadenylyl sulfate = 3,3',5-triiodo-L-thyronine sulfate + adenosine 3',5'-bisphosphate + H(+). It catalyses the reaction 3,3',5'-triiodo-L-thyronine + 3'-phosphoadenylyl sulfate = 3,3',5'-triiodo-L-thyronine sulfate + adenosine 3',5'-bisphosphate + H(+). It carries out the reaction 3,3'-diiodo-L-thyronine + 3'-phosphoadenylyl sulfate = 3,3'-diiodo-L-thyronine sulfate + adenosine 3',5'-bisphosphate + H(+). The enzyme catalyses L-thyroxine + 3'-phosphoadenylyl sulfate = L-thyroxine sulfate + adenosine 3',5'-bisphosphate + H(+). Its function is as follows. Sulfotransferase that utilizes 3'-phospho-5'-adenylyl sulfate (PAPS) as sulfonate donor to catalyze the sulfate conjugation of a wide variety of acceptor molecules bearing a hydroxyl or an amine group. Sulfonation increases the water solubility of most compounds, and therefore their renal excretion, but it can also result in bioactivation to form active metabolites. Displays broad substrate specificity for small phenolic compounds. Plays an important role in the sulfonation of endogenous molecules such as steroid hormones. Mediates the sulfate conjugation of a variety of xenobiotics, including the drugs acetaminophen and minoxidil. Mediates also the metabolic activation of carcinogenic N-hydroxyarylamines leading to highly reactive intermediates capable of forming DNA adducts, potentially resulting in mutagenesis. May play a role in gut microbiota-host metabolic interaction. O-sulfonates 4-ethylphenol (4-EP), a dietary tyrosine-derived metabolite produced by gut bacteria. The product 4-EPS crosses the blood-brain barrier and may negatively regulate oligodendrocyte maturation and myelination, affecting the functional connectivity of different brain regions associated with the limbic system. Catalyzes the sulfate conjugation of dopamine. Catalyzes the sulfation of T4 (L-thyroxine/3,5,3',5'-tetraiodothyronine), T3 (3,5,3'-triiodothyronine), rT3 (3,3',5'-triiodothyronine) and 3,3'-T2 (3,3'-diiodothyronine), with a substrate preference of 3,3'-T2 &gt; rT3 &gt; T3 &gt; T4. This Homo sapiens (Human) protein is Sulfotransferase 1A1 (SULT1A1).